Consider the following 390-residue polypeptide: Monomeric sarcosine oxidase (390 aa).

Residue D6 to F36 coordinates FAD. S-8alpha-FAD cysteine is present on C316.

In terms of assembly, monomer. FAD serves as cofactor.

The protein resides in the cytoplasm. It catalyses the reaction sarcosine + O2 + H2O = formaldehyde + glycine + H2O2. Pyrrole-2-carboxylate is a competitive inhibitor. N-(cyclopropyl)glycine (CPG) is a mechanism-based inhibitor and inactivates the enzyme by covalently modifying the flavin. Functionally, catalyzes the oxidative demethylation of sarcosine. Can also oxidize other secondary amino acids such as N-methyl-L-alanine. The sequence is that of Monomeric sarcosine oxidase (soxA) from Bacillus sp. (strain B-0618).